We begin with the raw amino-acid sequence, 47 residues long: Delta-actitoxin-Ael1a (47 aa).

3 disulfides stabilise this stretch: Cys-4–Cys-44, Cys-6–Cys-34, and Cys-27–Cys-45.

This sequence belongs to the sea anemone sodium channel inhibitory toxin family. Type I subfamily. As to expression, expressed in ectodermal glands. Not expressed in nematocytes.

It localises to the secreted. Functionally, binds specifically to voltage-gated sodium channels (Nav), thereby delaying their inactivation during signal transduction. It strongly stimulates mammalian cardiac muscle contraction. Paralyzes the shore crab (C.maenas) by tetanic contractions after intramuscular injection. This is Delta-actitoxin-Ael1a from Anthopleura elegantissima (Green aggregating anemone).